Reading from the N-terminus, the 338-residue chain is Fructose-1,6-bisphosphatase 1 (338 aa).

Alanine 2 bears the N-acetylalanine mark. Residues 18-22 (VMEQG) and 28-32 (TGELT) each bind AMP. Aspartate 69 and glutamate 98 together coordinate Mg(2+). 113–114 (KY) contacts AMP. Residues aspartate 119, leucine 121, and aspartate 122 each coordinate Mg(2+). Residue 122–125 (DGSS) participates in substrate binding. Arginine 141 contacts AMP. Lysine 151 carries the N6-succinyllysine modification. Substrate-binding positions include 213–216 (NEGY), 244–249 (RYVGSM), tyrosine 265, and 275–277 (KLR). Tyrosine 216, tyrosine 245, and tyrosine 265 each carry phosphotyrosine. Glutamate 281 lines the Mg(2+) pocket.

This sequence belongs to the FBPase class 1 family. As to quaternary structure, homotetramer. The cofactor is Mg(2+). As to expression, detected in pancreatic beta-cell lines MIN6 and beta-TC and in liver (at protein level). Preferentially expressed in liver, with lower levels detected in pancreatic islets and intestine, and very low levels in blood, muscle, brain and spleen.

The catalysed reaction is beta-D-fructose 1,6-bisphosphate + H2O = beta-D-fructose 6-phosphate + phosphate. It participates in carbohydrate biosynthesis; gluconeogenesis. Subject to complex allosteric regulation. The enzyme can assume an active R-state, or an inactive T-state. Intermediate conformations may exist. AMP acts as an allosteric inhibitor. AMP binding affects the turnover of bound substrate and not the affinity for substrate. Fructose 2,6-bisphosphate acts as a competitive inhibitor. Fructose 2,6-bisphosphate and AMP have synergistic effects. Catalyzes the hydrolysis of fructose 1,6-bisphosphate to fructose 6-phosphate in the presence of divalent cations, acting as a rate-limiting enzyme in gluconeogenesis. Plays a role in regulating glucose sensing and insulin secretion of pancreatic beta-cells. Appears to modulate glycerol gluconeogenesis in liver. Important regulator of appetite and adiposity; increased expression of the protein in liver after nutrient excess increases circulating satiety hormones and reduces appetite-stimulating neuropeptides and thus seems to provide a feedback mechanism to limit weight gain. This Mus musculus (Mouse) protein is Fructose-1,6-bisphosphatase 1 (Fbp1).